The sequence spans 357 residues: Protein RecA (357 aa).

Residue 71–78 participates in ATP binding; that stretch reads GPESSGKT.

The protein belongs to the RecA family.

It localises to the cytoplasm. Its function is as follows. Can catalyze the hydrolysis of ATP in the presence of single-stranded DNA, the ATP-dependent uptake of single-stranded DNA by duplex DNA, and the ATP-dependent hybridization of homologous single-stranded DNAs. It interacts with LexA causing its activation and leading to its autocatalytic cleavage. The protein is Protein RecA of Ehrlichia chaffeensis (strain ATCC CRL-10679 / Arkansas).